The following is a 100-amino-acid chain: Urease subunit gamma (100 aa).

The protein belongs to the urease gamma subunit family. As to quaternary structure, heterotrimer of UreA (gamma), UreB (beta) and UreC (alpha) subunits. Three heterotrimers associate to form the active enzyme.

It localises to the cytoplasm. The enzyme catalyses urea + 2 H2O + H(+) = hydrogencarbonate + 2 NH4(+). The protein operates within nitrogen metabolism; urea degradation; CO(2) and NH(3) from urea (urease route): step 1/1. In Laribacter hongkongensis (strain HLHK9), this protein is Urease subunit gamma.